A 274-amino-acid chain; its full sequence is Methylamine utilization protein MauF (274 aa).

Transmembrane regions (helical) follow at residues 30 to 50 (WTRA…ALAM), 52 to 72 (AAHV…LSTW), 105 to 125 (LGYA…GGIA), 127 to 147 (LSGF…LAYG), 176 to 196 (WVVG…YVQT), 202 to 222 (VTAA…IAIF), and 253 to 273 (AAIA…MLAL).

It localises to the cell membrane. Its pathway is one-carbon metabolism; methylamine degradation. This is Methylamine utilization protein MauF (mauF) from Paracoccus versutus (Thiobacillus versutus).